The primary structure comprises 4836 residues: E3 ubiquitin-protein ligase HERC2 (4836 aa).

Residues 58 to 90 (LPLRKDDGVDAQSGTKKEDLNDKEKKEEEETPA) form a disordered region. A compositionally biased stretch (basic and acidic residues) spans 72–85 (TKKEDLNDKEKKEE). Thr273 is subject to Phosphothreonine. An RCC1 1-1 repeat occupies 416–462 (PTSHKGSLQEVIGWGLIGWKYYANVIGPIQCEGLASLGVMQVACAEK). Residues 463–513 (RFLILSRNGRVYTQAYNSDMLAPQLVQGLASRNIVKIAAHSDGHHYLALAA) form an RCC1 1-2 repeat. The RCC1 1-3 repeat unit spans residues 514 to 569 (TGEVYSWGCGDGGRLGHGDTVPLEEPKVISAFSGKQAGKHVVHIACGSTYSAAITA). An RCC1 1-4 repeat occupies 570-621 (EGELYTWGRGNYGRLGHGSSEDEAIPMLVAGLKGLKVIDVACGSGDAQTLAV). The stretch at 624–675 (NGQVWSWGDGDYGKLGRGGSDGCKTPKLIEKLQDLDVIKVRCGSQFSIALTK) is one RCC1 1-5 repeat. At Thr648 the chain carries Phosphothreonine. One copy of the RCC1 1-6 repeat lies at 676–727 (DGQVYSWGKGDNQRLGHGTEEHVRYPKLLEGLQGKKVIDVAAGSTHCLALTE). An RCC1 1-7 repeat occupies 729–779 (SEVHSWGSNDQCQHFDTLRVTKPEPTALPGLDSKHIVGIACGPAQSFAWSS). A coiled-coil region spans residues 948–981 (ALNAAITAEIQDIEAKKEAQKEKEIDEQEASAST). A Cytochrome b5 heme-binding domain is found at 1208 to 1284 (VTLIRKADLE…MHAFCVGQYL (77 aa)). The residue at position 1578 (Ser1578) is a Phosphoserine. The region spanning 1860–1933 (SGPELAAMMK…KYDLKLVELP (74 aa)) is the MIB/HERC2 domain. Ser1943 bears the Phosphoserine mark. Thr1945 is subject to Phosphothreonine. Positions 2351–2376 (GTGTLQTDDGAAASPDLGDMSPEGPQ) are disordered. Position 2455 is a phosphoserine (Ser2455). A CPH domain is found at 2555 to 2631 (RADFLSNDDY…RYIHVELIGY (77 aa)). The ZZ-type zinc-finger motif lies at 2704–2756 (HPGVTCDGCQTFPINGSRFKCRNCDDFDFCETCFKTKKHNTRHTFGRINEPGQ). 8 residues coordinate Zn(2+): Cys2709, Cys2712, Cys2724, Cys2727, Cys2733, Cys2736, His2742, and His2746. A DOC domain is found at 2760-2937 (FCGRSGKQLK…ASDNEEEEDD (178 aa)). A disordered region spans residues 2928–2947 (ASDNEEEEDDKGSTGSLIRK). Residue Ser2929 is modified to Phosphoserine. An RCC1 2-1 repeat occupies 2959 to 3010 (RTKVFVWGLNDKDQLGGLKGSKIKVPSFSETLSALNVVQVAGGSKSLFAVTV). The stretch at 3011 to 3065 (EGKVYSCGEATNGRLGLGMSSGTVPIPRQITALSSYVVKKVAVHSGGRHATALTV) is one RCC1 2-2 repeat. Residues 3066-3117 (DGKVFSWGEGDDGKLGHFSRMNCDKPRLIEALKTKRIRDIACGSSHSAALTS) form an RCC1 2-3 repeat. The RCC1 2-4 repeat unit spans residues 3119–3169 (GELYTWGLGEYGRLGHGDNTTQLKPKMVKVLLGHRVIQVACGSRDAQTLAL). One copy of the RCC1 2-5 repeat lies at 3172 to 3223 (EGLVFSWGDGDFGKLGRGGSEGCNIPQNIERLNGQGVCQIECGAQFSLALTK). The stretch at 3225 to 3275 (GVVWTWGKGDYFRLGHGSDVHVRKPQVVEGLRGKKIVHVAVGALHCLAVTD) is one RCC1 2-6 repeat. An RCC1 2-7 repeat occupies 3276–3327 (SGQVYAWGDNDHGQQGNGTTTVNRKPTLVQGLEGQKITRVACGSSHSVAWTT). Disordered stretches follow at residues 3479–3499 (DAVT…RPFI), 3517–3537 (KTKE…QSLD), and 3604–3632 (SQSG…SGTV). Low complexity predominate over residues 3480–3495 (AVTPSAVTPSAPSASS). Polar residues-rich tracts occupy residues 3604–3613 (SQSGRLSSQP) and 3620–3631 (HPYTDDTSTSGT). The RCC1 3-1 repeat unit spans residues 3953–4004 (SGTIYGWGHNHRGQLGGIEGAKVKVPTPCEALATLRPVQLIGGEQTLFAVTA). The RCC1 3-2 repeat unit spans residues 4006 to 4058 (GKLYATGYGAGGRLGIGGTESVSTPTLLESIQHVFIKKVAVNSGGKHCLALSS). One copy of the RCC1 3-3 repeat lies at 4060 to 4110 (GEVYSWGEAEDGKLGHGNRSPCDRPRVIESLRGIEVVDVAAGGAHSACVTA). The stretch at 4112-4164 (GDLYTWGKGRYGRLGHSDSEDQLKPKLVEALQGHRVIDIACGSGDAQTLCLTD) is one RCC1 3-4 repeat. One copy of the RCC1 3-5 repeat lies at 4166 to 4216 (DTVWSWGDGDYGKLGRGGSDGCKVPMKIDSLTGLGVVKVECGSQFSVALTK). The RCC1 3-6 repeat unit spans residues 4218-4268 (GAVYTWGKGDYHRLGHGSDDHVRRPRQVQGLQGKKVIAIATGSLHCVCCTE). An RCC1 3-7 repeat occupies 4270–4320 (GEVYTWGDNDEGQLGDGTTNAIQRPRLVAALQGKKVNRVACGSAHTLAWST). An HECT domain is found at 4459–4796 (DSLLLPHRVW…IHFCKSIDTD (338 aa)). Cys4764 (glycyl thioester intermediate) is an active-site residue. A disordered region spans residues 4806–4836 (EPAADDSSEDSDNEDADSFASDSTQDYLTGH). Over residues 4808–4822 (AADDSSEDSDNEDAD) the composition is skewed to acidic residues. A phosphoserine mark is found at Ser4812, Ser4813, and Ser4816. Thr4829 carries the post-translational modification Phosphothreonine.

As to quaternary structure, interacts (when phosphorylated at Thr-4829 and sumoylated) with RNF8 (via FHA domain); this interaction increases after ionising radiation (IR) treatment. Interacts with XPA. Interacts with NEURL4. Via its interaction with NEURL4, may indirectly interact with CCP110 and CEP97. In terms of processing, phosphorylation at Thr-4829 is required for interaction with RNF8. Post-translationally, sumoylated with SUMO1 by PIAS4 in response to double-strand breaks (DSBs), promoting the interaction with RNF8. Highest levels are found in brain and testis with lower levels in heart, lung, liver, skeletal muscle and kidney. Little expression detected in spleen.

The protein localises to the cytoplasm. It localises to the cytoskeleton. It is found in the microtubule organizing center. The protein resides in the centrosome. Its subcellular location is the centriole. The protein localises to the nucleus. The enzyme catalyses S-ubiquitinyl-[E2 ubiquitin-conjugating enzyme]-L-cysteine + [acceptor protein]-L-lysine = [E2 ubiquitin-conjugating enzyme]-L-cysteine + N(6)-ubiquitinyl-[acceptor protein]-L-lysine.. It functions in the pathway protein modification; protein ubiquitination. Its function is as follows. E3 ubiquitin-protein ligase that regulates ubiquitin-dependent retention of repair proteins on damaged chromosomes. Recruited to sites of DNA damage in response to ionizing radiation (IR) and facilitates the assembly of UBE2N and RNF8 promoting DNA damage-induced formation of 'Lys-63'-linked ubiquitin chains. Acts as a mediator of binding specificity between UBE2N and RNF8. Involved in the maintenance of RNF168 levels. E3 ubiquitin-protein ligase that promotes the ubiquitination and proteasomal degradation of XPA which influences the circadian oscillation of DNA excision repair activity. By controlling the steady-state expression of the IGF1R receptor, indirectly regulates the insulin-like growth factor receptor signaling pathway. Also modulates iron metabolism by regulating the basal turnover of FBXL5. This chain is E3 ubiquitin-protein ligase HERC2, found in Mus musculus (Mouse).